A 239-amino-acid chain; its full sequence is tRNA (guanine-N(7)-)-methyltransferase (239 aa).

Residues E68, E93, D120, and D143 each coordinate S-adenosyl-L-methionine. D143 is an active-site residue. Residues K147, D180, and 217–220 contribute to the substrate site; that span reads TKFE.

This sequence belongs to the class I-like SAM-binding methyltransferase superfamily. TrmB family.

The enzyme catalyses guanosine(46) in tRNA + S-adenosyl-L-methionine = N(7)-methylguanosine(46) in tRNA + S-adenosyl-L-homocysteine. Its pathway is tRNA modification; N(7)-methylguanine-tRNA biosynthesis. Functionally, catalyzes the formation of N(7)-methylguanine at position 46 (m7G46) in tRNA. The sequence is that of tRNA (guanine-N(7)-)-methyltransferase from Vibrio cholerae serotype O1 (strain ATCC 39541 / Classical Ogawa 395 / O395).